Reading from the N-terminus, the 677-residue chain is Probable serine/threonine-protein kinase mkcF (677 aa).

Residues 1–58 (MLYLVATGDYKGPSENHLSFTKGQRIEFLERTENGFIKGKLDGKVGIFPSSLITIETR) enclose the SH3 domain. The disordered stretch occupies residues 72 to 244 (TETKDDTGSI…SSSSSSTKRR (173 aa)). Over residues 79 to 94 (GSISSSTSTSTSSLTT) the composition is skewed to low complexity. The span at 105–126 (GEQQPSTSTINGQSSSTSPILQ) shows a compositional bias: polar residues. A compositionally biased stretch (low complexity) spans 127 to 146 (SNGTTNTTTSSTSNNNIGDN). The segment covering 158–174 (TTSNHSKSASRLSVASF) has biased composition (polar residues). Residues 175–192 (STTTTATTTTTTTTTATS) show a composition bias toward low complexity. Residues 209 to 224 (DKKSKDDDKSEKEGLY) show a composition bias toward basic and acidic residues. Low complexity predominate over residues 230-240 (SSSSSSSSSSS). The Protein kinase domain occupies 401-646 (IKFTHMVGRG…VDKLMRHPFF (246 aa)). ATP contacts are provided by residues 407–415 (VGRGQYGKV) and K428. D519 acts as the Proton acceptor in catalysis.

This sequence belongs to the protein kinase superfamily. Ser/Thr protein kinase family. STE20 subfamily. The cofactor is Mg(2+).

It catalyses the reaction L-seryl-[protein] + ATP = O-phospho-L-seryl-[protein] + ADP + H(+). It carries out the reaction L-threonyl-[protein] + ATP = O-phospho-L-threonyl-[protein] + ADP + H(+). The protein is Probable serine/threonine-protein kinase mkcF of Dictyostelium discoideum (Social amoeba).